Consider the following 376-residue polypeptide: Chaperone protein DnaJ (376 aa).

The J domain maps to 4-68 (DYYDILGVDR…DTRSRYDQFG (65 aa)). Residues 135–217 (GGEKEIRIPH…CNGAGRRQVT (83 aa)) form a CR-type zinc finger. 8 residues coordinate Zn(2+): cysteine 148, cysteine 151, cysteine 165, cysteine 168, cysteine 191, cysteine 194, cysteine 205, and cysteine 208. CXXCXGXG motif repeat units follow at residues 148–155 (CQVCKGDG), 165–172 (CSTCNGQG), 191–198 (CPACNGQG), and 205–212 (CEVCNGAG).

This sequence belongs to the DnaJ family. In terms of assembly, homodimer. It depends on Zn(2+) as a cofactor.

It is found in the cytoplasm. In terms of biological role, participates actively in the response to hyperosmotic and heat shock by preventing the aggregation of stress-denatured proteins and by disaggregating proteins, also in an autonomous, DnaK-independent fashion. Unfolded proteins bind initially to DnaJ; upon interaction with the DnaJ-bound protein, DnaK hydrolyzes its bound ATP, resulting in the formation of a stable complex. GrpE releases ADP from DnaK; ATP binding to DnaK triggers the release of the substrate protein, thus completing the reaction cycle. Several rounds of ATP-dependent interactions between DnaJ, DnaK and GrpE are required for fully efficient folding. Also involved, together with DnaK and GrpE, in the DNA replication of plasmids through activation of initiation proteins. This chain is Chaperone protein DnaJ, found in Crocosphaera subtropica (strain ATCC 51142 / BH68) (Cyanothece sp. (strain ATCC 51142)).